Here is a 452-residue protein sequence, read N- to C-terminus: Plasmepsin I (452 aa).

Residues 1 to 37 (MALSIKEDFSSAFAKNESAVNSSTFNNNMKTWKIQKR) are Cytoplasmic-facing. The propeptide occupies 1–123 (MALSIKEDFS…TGLTQKPHLG (123 aa)). The chain crosses the membrane as a helical; Signal-anchor for type II membrane protein span at residues 38 to 58 (FQILYVFFFLLITGALFYYLI). Residues 59-452 (DNVLFPKNKK…VGFALAKKKL (394 aa)) are Lumenal-facing. In terms of domain architecture, Peptidase A1 spans 139–446 (YYGEAQIGDN…DYDNHTVGFA (308 aa)). Asp-157 is a catalytic residue. A disulfide bridge links Cys-170 with Cys-175. The active site involves Asp-337. A disulfide bridge connects residues Cys-372 and Cys-408.

This sequence belongs to the peptidase A1 family. In terms of processing, not N-glycosylated. Proteolytically cleaved into the soluble active mature form in the digestive vacuole by cysteine protease falcipains; the process begins at the early ring stage. Proteolysis requires an acidic environment.

It is found in the membrane. The protein resides in the vacuole lumen. Its subcellular location is the vacuole membrane. It carries out the reaction Hydrolysis of the 33-Phe-|-Leu-34 bond in the alpha-chain of hemoglobin, leading to denaturation of molecule.. With respect to regulation, inhibited by KNI derived compounds KNI-10333 and to a lesser extent KNI-10743. Functionally, during the asexual blood stage, catalyzes the initial cleavage of native host hemoglobin (Hb) resulting in Hb denaturation; specifically cleaves between Phe-33 and Leu-34 of Hb alpha-chain. Digestion of host Hb is an essential step which provides the parasite with amino acids for protein synthesis, and regulates osmolarity. This is Plasmepsin I from Plasmodium falciparum (isolate 3D7).